Here is a 212-residue protein sequence, read N- to C-terminus: Large ribosomal subunit protein uL1 (212 aa).

This sequence belongs to the universal ribosomal protein uL1 family. As to quaternary structure, part of the 50S ribosomal subunit.

Its function is as follows. Binds directly to 23S rRNA. Probably involved in E site tRNA release. Functionally, protein L1 is also a translational repressor protein, it controls the translation of its operon by binding to its mRNA. The protein is Large ribosomal subunit protein uL1 of Haloquadratum walsbyi (strain DSM 16790 / HBSQ001).